We begin with the raw amino-acid sequence, 75 residues long: ORF2p protein (75 aa).

The important for viral replication in intestinal cells stretch occupies residues W13–V18. A transmembrane span lies at residues I23–I45. The tract at residues A53–L75 is disordered.

It localises to the host cytoplasmic vesicle membrane. In terms of biological role, facilitates virus release from intestinal cells in vitro, possibly through the host autophagic pathway. The chain is ORF2p protein from Human enterovirus 71 (strain USA/BrCr/1970) (EV71).